A 613-amino-acid chain; its full sequence is Dihydroxy-acid dehydratase (613 aa).

D81 lines the Mg(2+) pocket. Position 122 (C122) interacts with [2Fe-2S] cluster. Mg(2+)-binding residues include D123 and K124. K124 is subject to N6-carboxylysine. C193 contacts [2Fe-2S] cluster. E489 contributes to the Mg(2+) binding site. S515 serves as the catalytic Proton acceptor.

This sequence belongs to the IlvD/Edd family. Homodimer. [2Fe-2S] cluster is required as a cofactor. Requires Mg(2+) as cofactor.

It carries out the reaction (2R)-2,3-dihydroxy-3-methylbutanoate = 3-methyl-2-oxobutanoate + H2O. The catalysed reaction is (2R,3R)-2,3-dihydroxy-3-methylpentanoate = (S)-3-methyl-2-oxopentanoate + H2O. The protein operates within amino-acid biosynthesis; L-isoleucine biosynthesis; L-isoleucine from 2-oxobutanoate: step 3/4. Its pathway is amino-acid biosynthesis; L-valine biosynthesis; L-valine from pyruvate: step 3/4. Its function is as follows. Functions in the biosynthesis of branched-chain amino acids. Catalyzes the dehydration of (2R,3R)-2,3-dihydroxy-3-methylpentanoate (2,3-dihydroxy-3-methylvalerate) into 2-oxo-3-methylpentanoate (2-oxo-3-methylvalerate) and of (2R)-2,3-dihydroxy-3-methylbutanoate (2,3-dihydroxyisovalerate) into 2-oxo-3-methylbutanoate (2-oxoisovalerate), the penultimate precursor to L-isoleucine and L-valine, respectively. This Pseudomonas putida (strain ATCC 47054 / DSM 6125 / CFBP 8728 / NCIMB 11950 / KT2440) protein is Dihydroxy-acid dehydratase.